The primary structure comprises 81 residues: Thrombin-like enzyme collinein-3 (81 aa).

D4 is a catalytic residue. A disulfide bridge links C51 with C68.

Monomer. In terms of tissue distribution, expressed by the vanom gland.

The protein localises to the secreted. Thrombin-like snake venom serine protease. The chain is Thrombin-like enzyme collinein-3 from Crotalus durissus collilineatus (Brazilian rattlesnake).